Consider the following 388-residue polypeptide: Probable proton-coupled zinc antiporter SLC30A3 (388 aa).

Residues 1–42 (MEPSPASGGSETTRLVSPRDRSSAGGGLRLKSLFTEPSEPLP) form a disordered region. Over 1-75 (MEPSPASGGS…SPERAQARRQ (75 aa)) the chain is Cytoplasmic. Residues Ser63 and Ser66 each carry the phosphoserine modification. A helical membrane pass occupies residues 76-96 (LYAACVVCFIFMAGEVVGGYL). At 97–105 (AHSLAIMTD) the chain is on the lumenal side. The chain crosses the membrane as a helical span at residues 106–126 (AAHLLADIGSMMASLFSLWLS). Zn(2+) contacts are provided by His108 and Asp112. Topologically, residues 127–145 (TRPATRTMTFGWHRSETLG) are cytoplasmic. A helical membrane pass occupies residues 146 to 166 (ALASVVSLWIVTGILLYLAFL). Topologically, residues 167–177 (RLLHSDYHIEA) are lumenal. The helical transmembrane segment at 178–198 (GAMLLTASIAVCANMIMAFVL) threads the bilayer. At 199–235 (HQTGAPHSHGPRGAEYAPLEEGHGHPLSLGNTSVRAA) the chain is on the cytoplasmic side. A helical membrane pass occupies residues 236-256 (FVHVLGDLLQSLGVLAASILI). Residues His238 and Asp242 each coordinate Zn(2+). At 257-263 (YFKPQYK) the chain is on the lumenal side. The chain crosses the membrane as a helical span at residues 264 to 284 (VADPISTFLFSICALGSTAPT). The Cytoplasmic portion of the chain corresponds to 285 to 388 (LRDVLLVLME…CLRCREPPKA (104 aa)).

This sequence belongs to the cation diffusion facilitator (CDF) transporter (TC 2.A.4) family. SLC30A subfamily. Homodimer. Homodimerization could regulate efficiency of zinc transport. Interacts with TMEM163.

Its subcellular location is the cytoplasmic vesicle. It localises to the secretory vesicle. It is found in the synaptic vesicle membrane. The protein resides in the synapse. The protein localises to the synaptosome. Its subcellular location is the late endosome membrane. It localises to the lysosome membrane. The catalysed reaction is Zn(2+)(in) + 2 H(+)(out) = Zn(2+)(out) + 2 H(+)(in). Functionally, probable proton-coupled zinc ion antiporter mediating the import of zinc from cytoplasm into synaptic vesicles and participating to cellular zinc ion homeostasis in the brain. This chain is Probable proton-coupled zinc antiporter SLC30A3, found in Rattus norvegicus (Rat).